The primary structure comprises 425 residues: Serine hydroxymethyltransferase (425 aa).

132–134 contributes to the (6S)-5,6,7,8-tetrahydrofolate binding site; the sequence is GHL. At lysine 237 the chain carries N6-(pyridoxal phosphate)lysine.

The protein belongs to the SHMT family. In terms of assembly, homodimer. Pyridoxal 5'-phosphate is required as a cofactor.

The protein resides in the cytoplasm. The enzyme catalyses (6R)-5,10-methylene-5,6,7,8-tetrahydrofolate + glycine + H2O = (6S)-5,6,7,8-tetrahydrofolate + L-serine. It functions in the pathway one-carbon metabolism; tetrahydrofolate interconversion. The protein operates within amino-acid biosynthesis; glycine biosynthesis; glycine from L-serine: step 1/1. Its function is as follows. Catalyzes the reversible interconversion of serine and glycine with tetrahydrofolate (THF) serving as the one-carbon carrier. This reaction serves as the major source of one-carbon groups required for the biosynthesis of purines, thymidylate, methionine, and other important biomolecules. Also exhibits THF-independent aldolase activity toward beta-hydroxyamino acids, producing glycine and aldehydes, via a retro-aldol mechanism. The sequence is that of Serine hydroxymethyltransferase from Wolbachia sp. subsp. Brugia malayi (strain TRS).